A 225-amino-acid polypeptide reads, in one-letter code: Cbp/p300-interacting transactivator 2 (225 aa).

This sequence belongs to the CITED family.

The protein resides in the nucleus. Functionally, transcriptional coactivator or corepressor of the p300/CBP-mediated transcription complex. May be involved in sex determination, early gonad development, left-right patterning during embryogenesis and differentiation of the adrenal cortex. This is Cbp/p300-interacting transactivator 2 (cited2) from Xenopus tropicalis (Western clawed frog).